Reading from the N-terminus, the 351-residue chain is Autoinducer 2 import system permease protein LsrC (351 aa).

Helical transmembrane passes span L14–L34, M39–L59, I70–A90, L93–L113, I115–L135, I155–W175, M213–P233, G252–L272, and L284–D304.

Belongs to the binding-protein-dependent transport system permease family. AraH/RbsC subfamily. The complex is composed of two ATP-binding proteins (LsrA), two transmembrane proteins (LsrC and LsrD) and a solute-binding protein (LsrB).

The protein resides in the cell inner membrane. Its function is as follows. Part of the ABC transporter complex LsrABCD involved in autoinducer 2 (AI-2) import. Probably responsible for the translocation of the substrate across the membrane. The polypeptide is Autoinducer 2 import system permease protein LsrC (lsrC) (Yersinia pseudotuberculosis serotype O:1b (strain IP 31758)).